The following is a 523-amino-acid chain: F-box only protein 31-B (523 aa).

An F-box domain is found at 59–105 (PRSLLQLPPEILVEIFSSLPGTELPSLAQVCRKFRQILTTDTIWKRR). Cys-201, His-209, Cys-225, and His-231 together coordinate Zn(2+). Residues 372–427 (IQREQRQTGNEEDDGKGAGPDRAEHSQQPAPVHRPAKEDVNGVDNADDREQKPPNV) form a disordered region. Composition is skewed to basic and acidic residues over residues 386–396 (GKGAGPDRAEH) and 406–423 (PAKE…REQK).

This sequence belongs to the FBXO31 family. Part of a SCF (SKP1-cullin-F-box) protein ligase complex SCF(FBXO31).

It is found in the cytoplasm. It functions in the pathway protein modification; protein ubiquitination. Functionally, substrate-recognition component of the SCF(FBXO31) protein ligase complex, which specifically mediates the ubiquitination of proteins amidated at their C-terminus in response to oxidative stress, leading to their degradation by the proteasome. Fbxo31 specifically recognizes and binds C-terminal peptides bearing an amide: C-terminal amidation in response to oxidative stress takes place following protein fragmentation. The SCF(FBXO31) also plays a role in G1 arrest following DNA damage by mediating ubiquitination of phosphorylated cyclin-D1 (ccnd1), promoting its degradation by the proteasome, resulting in G1 arrest. The SCF(FBXO31) complex is however not a major regulator of ccnd1 stability during the G1/S transition. The chain is F-box only protein 31-B (fbxo31-b) from Xenopus laevis (African clawed frog).